The sequence spans 347 residues: Tetracycline resistance determinant (347 aa).

The next 8 helical transmembrane spans lie at 3-20 (VLGA…LIVA), 30-52 (SPAA…PVEL), 73-95 (CSAV…PLFL), 108-130 (LVVI…LIAS), 137-156 (LAIV…ATTG), 161-183 (MWGI…TVIT), 204-226 (CAGQ…AVAL), and 294-316 (GFHI…TWFL). Residues 321-347 (EETAPEEERPAESGAGAKNGPLPASDA) are disordered.

It belongs to the major facilitator superfamily. TCR/Tet family.

It localises to the cell membrane. Functionally, resistance to tetracycline by an active tetracycline efflux. This is an energy-dependent process that decreases the accumulation of the antibiotic in whole cells. This protein functions as a metal-tetracycline/H(+) antiporter. This chain is Tetracycline resistance determinant (tetB), found in Streptomyces rimosus.